The primary structure comprises 373 residues: MAAFQIANKTVGKDAPVFIIAEAGINHDGKLDQAFALIDAAAEAGADAVKFQMFQADRMYQKDPGLYKTAAGKDVSIFSLVQSMEMPAEWILPLLDYCREKQVIFLSTVCDEGSADLLQSTSPSAFKIASYEINHLPLLKYVARLNRPMIFSTAGAEISDVHEAWRTIRAEGNNQIAIMHCVAKYPAPPEYSNLSVIPMLAAAFPEAVIGFSDHSEHPTEAPCAAVRLGAKLIEKHFTIDKNLPGADHSFALNPDELKEMVDGIRKTEAELKQGITKPVSEKLLGSSYKTTTAIEGEIRNFAYRGIFTTAPIQKGEAFSEDNIAVLRPGQKPQGLHPRFFELLTSGVRAVRDIPADTGIVWDDILLKDSPFHE.

The region spanning 305-367 (GIFTTAPIQK…GIVWDDILLK (63 aa)) is the AFP-like domain.

It functions in the pathway spore coat biogenesis; spore coat polysaccharide biosynthesis. This chain is Spore coat polysaccharide biosynthesis protein SpsE (spsE), found in Bacillus subtilis (strain 168).